The following is a 337-amino-acid chain: Ribosomal RNA small subunit methyltransferase C (337 aa).

It belongs to the methyltransferase superfamily. RsmC family. Monomer.

It localises to the cytoplasm. It catalyses the reaction guanosine(1207) in 16S rRNA + S-adenosyl-L-methionine = N(2)-methylguanosine(1207) in 16S rRNA + S-adenosyl-L-homocysteine + H(+). Its function is as follows. Specifically methylates the guanine in position 1207 of 16S rRNA in the 30S particle. This is Ribosomal RNA small subunit methyltransferase C from Acinetobacter baumannii (strain ATCC 17978 / DSM 105126 / CIP 53.77 / LMG 1025 / NCDC KC755 / 5377).